We begin with the raw amino-acid sequence, 184 residues long: Peptide deformylase (184 aa).

Fe cation contacts are provided by Cys98 and His140. Glu141 is a catalytic residue. Residue His144 participates in Fe cation binding.

The protein belongs to the polypeptide deformylase family. Fe(2+) is required as a cofactor.

It carries out the reaction N-terminal N-formyl-L-methionyl-[peptide] + H2O = N-terminal L-methionyl-[peptide] + formate. In terms of biological role, removes the formyl group from the N-terminal Met of newly synthesized proteins. Requires at least a dipeptide for an efficient rate of reaction. N-terminal L-methionine is a prerequisite for activity but the enzyme has broad specificity at other positions. The polypeptide is Peptide deformylase (Bacteroides thetaiotaomicron (strain ATCC 29148 / DSM 2079 / JCM 5827 / CCUG 10774 / NCTC 10582 / VPI-5482 / E50)).